Reading from the N-terminus, the 566-residue chain is Lamin-1 (566 aa).

A disordered region spans residues 1–37 (MSSRKGTRSSRIVTLERSANSSLSNNGGGDDSFGSTL). Serine 2 is modified (N-acetylserine). Positions 13-47 (VTLERSANSSLSNNGGGDDSFGSTLLETSRLQEKD) are head. Positions 45–387 (EKDHLTSLNS…ALLEGEEERL (343 aa)) constitute an IF rod domain. The interval 48–82 (HLTSLNSRLATYIDKVRQLEQENNRLQVQIRDIEV) is coil 1A. The linker 1 stretch occupies residues 83–94 (VEKKEKSNLADR). The tract at residues 95-228 (FEAEKARLRR…AFALQQHKGE (134 aa)) is coil 1B. Residues 229–256 (LEEVRHKRQVDMTTYAKQINDEYQSKLQ) are linker 2. A coil 2 region spans residues 257–385 (DQIEEMRAQF…YQALLEGEEE (129 aa)). The segment at 386 to 566 (RLNLTQEAPQ…SDPADRCSIM (181 aa)) is tail. The LTD domain occupies 435–550 (RRSKLNKETV…DTVSSITVEF (116 aa)). The interval 528–566 (GDNPSARLEDSEGDTVSSITVEFSESSDPSDPADRCSIM) is disordered. The span at 541–556 (DTVSSITVEFSESSDP) shows a compositional bias: polar residues. Cysteine 563 bears the Cysteine methyl ester mark. Cysteine 563 is lipidated: S-farnesyl cysteine. Positions 564-566 (SIM) are cleaved as a propeptide — removed in mature form.

This sequence belongs to the intermediate filament family. In terms of assembly, interacts with LEM domain proteins lem-2 and emr-1. May interact with unc-84; this interaction may be required to complete the connection between the nuclear lamina and the cytoskeleton. As to expression, ubiquitous. Expressed in all cells, except in cells undergoing spermatogenesis.

Its subcellular location is the nucleus envelope. It is found in the nucleus inner membrane. Major component of the nuclear lamina, a fibrous layer on the nucleoplasmic side of the inner nuclear membrane. Provides a framework for the nuclear envelope and probably also interacts with chromatin. Essential to maintain the shape and integrity of the nucleus, and for DNA replication. Involved in spatial organization of nuclear pore complexes. It is not a target for ced-3 during apoptosis, suggesting that lamin cleavage is not essential for apoptosis in C.elegans. This chain is Lamin-1, found in Caenorhabditis elegans.